The chain runs to 286 residues: ATP synthase gamma chain (286 aa).

Belongs to the ATPase gamma chain family. As to quaternary structure, F-type ATPases have 2 components, CF(1) - the catalytic core - and CF(0) - the membrane proton channel. CF(1) has five subunits: alpha(3), beta(3), gamma(1), delta(1), epsilon(1). CF(0) has three main subunits: a, b and c.

The protein localises to the cell inner membrane. In terms of biological role, produces ATP from ADP in the presence of a proton gradient across the membrane. The gamma chain is believed to be important in regulating ATPase activity and the flow of protons through the CF(0) complex. The sequence is that of ATP synthase gamma chain from Shewanella putrefaciens (strain CN-32 / ATCC BAA-453).